The sequence spans 435 residues: Glutamate-1-semialdehyde 2,1-aminomutase (435 aa).

Lys270 is modified (N6-(pyridoxal phosphate)lysine).

This sequence belongs to the class-III pyridoxal-phosphate-dependent aminotransferase family. HemL subfamily. In terms of assembly, homodimer. The cofactor is pyridoxal 5'-phosphate.

The protein localises to the cytoplasm. It catalyses the reaction (S)-4-amino-5-oxopentanoate = 5-aminolevulinate. Its pathway is porphyrin-containing compound metabolism; protoporphyrin-IX biosynthesis; 5-aminolevulinate from L-glutamyl-tRNA(Glu): step 2/2. This is Glutamate-1-semialdehyde 2,1-aminomutase from Wigglesworthia glossinidia brevipalpis.